A 213-amino-acid chain; its full sequence is Nicotinate-nucleotide adenylyltransferase (213 aa).

The protein belongs to the NadD family.

The catalysed reaction is nicotinate beta-D-ribonucleotide + ATP + H(+) = deamido-NAD(+) + diphosphate. Its pathway is cofactor biosynthesis; NAD(+) biosynthesis; deamido-NAD(+) from nicotinate D-ribonucleotide: step 1/1. Functionally, catalyzes the reversible adenylation of nicotinate mononucleotide (NaMN) to nicotinic acid adenine dinucleotide (NaAD). This Salmonella typhi protein is Nicotinate-nucleotide adenylyltransferase.